The primary structure comprises 327 residues: Tetraacyldisaccharide 4'-kinase (327 aa).

52-59 (TLGGAGKT) is an ATP binding site.

The protein belongs to the LpxK family.

It catalyses the reaction a lipid A disaccharide + ATP = a lipid IVA + ADP + H(+). It functions in the pathway glycolipid biosynthesis; lipid IV(A) biosynthesis; lipid IV(A) from (3R)-3-hydroxytetradecanoyl-[acyl-carrier-protein] and UDP-N-acetyl-alpha-D-glucosamine: step 6/6. Transfers the gamma-phosphate of ATP to the 4'-position of a tetraacyldisaccharide 1-phosphate intermediate (termed DS-1-P) to form tetraacyldisaccharide 1,4'-bis-phosphate (lipid IVA). The chain is Tetraacyldisaccharide 4'-kinase from Methylorubrum extorquens (strain PA1) (Methylobacterium extorquens).